The primary structure comprises 71 residues: Sec-independent protein translocase protein TatA (71 aa).

A helical membrane pass occupies residues 1–21; that stretch reads MGSFSMWHWLIVLAIVLLLFG. A disordered region spans residues 40 to 71; it reads KKGMSDDDTAPDGTPKPADQSKTVDHRADDHK. Over residues 61–71 the composition is skewed to basic and acidic residues; sequence KTVDHRADDHK.

It belongs to the TatA/E family. As to quaternary structure, the Tat system comprises two distinct complexes: a TatABC complex, containing multiple copies of TatA, TatB and TatC subunits, and a separate TatA complex, containing only TatA subunits. Substrates initially bind to the TatABC complex, which probably triggers association of the separate TatA complex to form the active translocon.

It localises to the cell inner membrane. Its function is as follows. Part of the twin-arginine translocation (Tat) system that transports large folded proteins containing a characteristic twin-arginine motif in their signal peptide across membranes. TatA could form the protein-conducting channel of the Tat system. The protein is Sec-independent protein translocase protein TatA of Allorhizobium ampelinum (strain ATCC BAA-846 / DSM 112012 / S4) (Agrobacterium vitis (strain S4)).